The chain runs to 368 residues: Glutaminyl-peptide cyclotransferase (368 aa).

The N-terminal stretch at 1–23 is a signal peptide; that stretch reads MAGERRDSKAAAFFCLAWALCLA. Residue asparagine 53 is glycosylated (N-linked (GlcNAc...) asparagine). An intrachain disulfide couples cysteine 143 to cysteine 169. Aspartate 164 is a Zn(2+) binding site. Residue glutamate 207 is the Proton acceptor of the active site. Position 208 (glutamate 208) interacts with Zn(2+). Aspartate 254 functions as the Proton acceptor in the catalytic mechanism. A glycan (N-linked (GlcNAc...) asparagine) is linked at asparagine 292. Residue histidine 336 coordinates Zn(2+). Residue asparagine 352 is glycosylated (N-linked (GlcNAc...) asparagine).

It belongs to the glutaminyl-peptide cyclotransferase family. In terms of tissue distribution, expressed by the venom gland.

The protein resides in the secreted. It catalyses the reaction N-terminal L-glutaminyl-[peptide] = N-terminal 5-oxo-L-prolyl-[peptide] + NH4(+). Its function is as follows. Responsible for the biosynthesis of pyroglutamyl peptides. Has a bias against acidic and tryptophan residues adjacent to the N-terminal glutaminyl residue and a lack of importance of chain length after the second residue. Also catalyzes N-terminal pyroglutamate formation. This chain is Glutaminyl-peptide cyclotransferase (QPCT), found in Boiga irregularis (Brown tree snake).